The sequence spans 559 residues: Amino-acid acetyltransferase, mitochondrial (559 aa).

A disordered region spans residues 162 to 188; the sequence is RLGPKPGSEDPTSELDFTPPETHTLPP. The region spanning 362-538 is the N-acetyltransferase domain; sequence LPVQVFHSVS…GSAGLSYVED (177 aa).

The protein belongs to the acetyltransferase family.

The protein localises to the mitochondrion. It carries out the reaction L-glutamate + acetyl-CoA = N-acetyl-L-glutamate + CoA + H(+). The protein operates within amino-acid biosynthesis; L-arginine biosynthesis; N(2)-acetyl-L-ornithine from L-glutamate: step 1/4. Functionally, N-acetylglutamate synthase involved in arginine biosynthesis. The chain is Amino-acid acetyltransferase, mitochondrial (ARG2) from Laccaria bicolor (strain S238N-H82 / ATCC MYA-4686) (Bicoloured deceiver).